A 388-amino-acid chain; its full sequence is Succinate--CoA ligase [ADP-forming] subunit beta (388 aa).

The ATP-grasp domain maps to Lys9–Leu244. ATP-binding positions include Lys46, Gly53–Gly55, Val102, and Glu107. The Mg(2+) site is built by Asn199 and Asp213. Substrate-binding positions include Asn264 and Gly321–Met323.

It belongs to the succinate/malate CoA ligase beta subunit family. Heterotetramer of two alpha and two beta subunits. It depends on Mg(2+) as a cofactor.

The enzyme catalyses succinate + ATP + CoA = succinyl-CoA + ADP + phosphate. It catalyses the reaction GTP + succinate + CoA = succinyl-CoA + GDP + phosphate. It functions in the pathway carbohydrate metabolism; tricarboxylic acid cycle; succinate from succinyl-CoA (ligase route): step 1/1. In terms of biological role, succinyl-CoA synthetase functions in the citric acid cycle (TCA), coupling the hydrolysis of succinyl-CoA to the synthesis of either ATP or GTP and thus represents the only step of substrate-level phosphorylation in the TCA. The beta subunit provides nucleotide specificity of the enzyme and binds the substrate succinate, while the binding sites for coenzyme A and phosphate are found in the alpha subunit. The chain is Succinate--CoA ligase [ADP-forming] subunit beta from Chlamydia caviae (strain ATCC VR-813 / DSM 19441 / 03DC25 / GPIC) (Chlamydophila caviae).